Consider the following 432-residue polypeptide: Amino acid transporter ANT1 (432 aa).

Residues 1–30 are disordered; that stretch reads MAIKDLTATTGDSSLPLIKSPPSETTGGDR. Residues 1–35 lie on the Cytoplasmic side of the membrane; that stretch reads MAIKDLTATTGDSSLPLIKSPPSETTGGDRTSALQ. The chain crosses the membrane as a helical span at residues 36-56; the sequence is TLGNIIVSIVGTGVLGLPYAF. The Lumenal segment spans residues 57–62; that stretch reads RIAGWL. Residues 63 to 83 form a helical membrane-spanning segment; it reads AGSLGVIIVGFATYYCMLLLI. Over 84–115 the chain is Cytoplasmic; sequence QCRDKLESEEGEEESKTYGDLGFKCMGTKGRY. The chain crosses the membrane as a helical span at residues 116–136; that stretch reads LTEFLIFTAQCGGSVAYLVFI. The Lumenal portion of the chain corresponds to 137–147; it reads GRNLSSIFSSY. Residues 148–168 traverse the membrane as a helical segment; that stretch reads GLSMVSFILILVPIEVGLSWI. Topologically, residues 169–172 are cytoplasmic; sequence TSLS. A helical transmembrane segment spans residues 173 to 193; the sequence is ALSPFSIFADICNIIAMCFVV. At 194 to 219 the chain is on the lumenal side; that stretch reads KENVEMVIEGDFSFSDRTAISSTIGG. The chain crosses the membrane as a helical span at residues 220–240; the sequence is LPFAGGVAVFCFEGFAMTLAL. At 241 to 256 the chain is on the cytoplasmic side; the sequence is ESSMREREAFPKLLAK. The helical transmembrane segment at 257-277 threads the bilayer; it reads VLAGITFVYVLFGFCGYMAYG. Over 278 to 292 the chain is Lumenal; sequence DQTKDIITLNLPNNW. Residues 293–313 form a helical membrane-spanning segment; it reads SAIAVQIGLCVGLTFTFPIMV. The Cytoplasmic portion of the chain corresponds to 314–353; it reads HPLNEIIEQKLKRIDWLQKHHNGYSNETGSVSKFAIFTTR. Residues 354-374 form a helical membrane-spanning segment; sequence TLLVVGLAAIASLVPGFGTFA. Over 375 to 379 the chain is Lumenal; the sequence is SLVGS. The helical transmembrane segment at 380–400 threads the bilayer; that stretch reads TLCALISFVLPASYHLTLLGP. Topologically, residues 401 to 410 are cytoplasmic; that stretch reads SLNVWNKSID. Residues 411-431 traverse the membrane as a helical segment; that stretch reads VFIVICGLIFAVYGTYNTIVG. Residue valine 432 is a topological domain, lumenal.

This sequence belongs to the amino acid/polyamine transporter 2 family. Amino acid/auxin permease (AAAP) (TC 2.A.18.8) subfamily. In terms of tissue distribution, ubiquitous. Highly expressed in flowers and cauline leaves and at lower levels in stems, leaves and roots.

It localises to the endoplasmic reticulum membrane. Its function is as follows. Translocates aromatic and neutral amino acids such as tyrosine, tryptophan, phenylalanine, histidine, proline, leucine, valine, glutamine, as well as arginine. Transports the auxins indole-3-acetic acid (IAA) and 2,4-dichlorophenoxyacetic acid (2,4-D). The polypeptide is Amino acid transporter ANT1 (Arabidopsis thaliana (Mouse-ear cress)).